The chain runs to 347 residues: Endo-1,4-beta-xylanase 3 (347 aa).

The first 16 residues, 1–16 (MKANVILCLLAPLVAA), serve as a signal peptide directing secretion. The propeptide occupies 17-45 (LPTETIHLDPELAALRANLTERTADLWDR). Pyrrolidone carboxylic acid is present on glutamine 46. One can recognise a GH10 domain in the interval 46–345 (QASQSIDQLI…KPAYNSIVGI (300 aa)). The Proton donor role is filled by glutamate 176. Glutamate 282 serves as the catalytic Nucleophile. Cysteine 300 and cysteine 306 form a disulfide bridge.

The protein belongs to the glycosyl hydrolase 10 (cellulase F) family. Monomer. Post-translationally, not glycosylated.

It localises to the secreted. It carries out the reaction Endohydrolysis of (1-&gt;4)-beta-D-xylosidic linkages in xylans.. It functions in the pathway glycan degradation; xylan degradation. Functionally, glycoside hydrolase involved in the hydrolysis of xylan, a major plant cell wall hemicellulose made up of 1,4-beta-linked D-xylopyranose residues. Catalyzes the endohydrolysis of the main-chain 1,4-beta-glycosidic bonds connecting the xylose subunits yielding various xylooligosaccharides and xylose. Produces xylobiose and xylotriose as the main degradation products. In Hypocrea jecorina (strain QM6a) (Trichoderma reesei), this protein is Endo-1,4-beta-xylanase 3 (xyn3).